We begin with the raw amino-acid sequence, 192 residues long: NF-kappa-B inhibitor-interacting Ras-like protein 1 (192 aa).

11–18 (GLLSVGKT) serves as a coordination point for GTP. Residues 35 to 43 (DCETMEDVY) carry the Effector region motif. Residues 58–93 (HLYDTRGLQEGVELPKHYFSFADGFVLVYSVNNLES) form an interactions with NFKBIA and NFKBIB region. GTP-binding positions include 61 to 65 (DTRGL) and 120 to 123 (NKID). The interval 168–192 (LSQPQSKSSFPLPGRKNKGNSSSEN) is disordered.

This sequence belongs to the small GTPase superfamily. Ras family. KappaB-Ras subfamily. As to quaternary structure, interacts with both NF-kappa-B inhibitor alpha (NFKBIA) and beta (NFKBIB) in vitro. However, it probably only interacts with NFKBIB in vivo. Forms a complex with NFKBIB and NF-kappa-B heterodimer (p50/NFKB1 and p65/RELA). Also interacts with c-Rel (REL).

The protein resides in the cytoplasm. Functionally, atypical Ras-like protein that acts as a potent regulator of NF-kappa-B activity by preventing the degradation of NF-kappa-B inhibitor beta (NFKBIB) by most signals, explaining why NFKBIB is more resistant to degradation. May act by blocking phosphorylation of NFKBIB and mediating cytoplasmic retention of p65/RELA NF-kappa-B subunit. It is unclear whether it acts as a GTPase. Both GTP- and GDP-bound forms block phosphorylation of NFKBIB. This chain is NF-kappa-B inhibitor-interacting Ras-like protein 1 (NKIRAS1), found in Macaca fascicularis (Crab-eating macaque).